A 297-amino-acid chain; its full sequence is Tyrosine recombinase XerC (297 aa).

The 84-residue stretch at 1–84 (MEEIQVTFLN…TLRTFYEFWM (84 aa)) folds into the Core-binding (CB) domain. Positions 105-286 (YLPQFFYEEE…SNQQLRKVYL (182 aa)) constitute a Tyr recombinase domain. Active-site residues include Arg145, Lys169, His238, Arg241, and His264. Catalysis depends on Tyr273, which acts as the O-(3'-phospho-DNA)-tyrosine intermediate.

Belongs to the 'phage' integrase family. XerC subfamily. As to quaternary structure, forms a cyclic heterotetrameric complex composed of two molecules of XerC and two molecules of XerD.

The protein localises to the cytoplasm. Its function is as follows. Site-specific tyrosine recombinase, which acts by catalyzing the cutting and rejoining of the recombining DNA molecules. The XerC-XerD complex is essential to convert dimers of the bacterial chromosome into monomers to permit their segregation at cell division. It also contributes to the segregational stability of plasmids. In Staphylococcus haemolyticus (strain JCSC1435), this protein is Tyrosine recombinase XerC.